The primary structure comprises 94 residues: Acylphosphatase (94 aa).

Residues 5-94 enclose the Acylphosphatase-like domain; sequence RLTAFVHGHV…PRDVEGFVER (90 aa). Residues arginine 20 and asparagine 38 contribute to the active site.

Belongs to the acylphosphatase family.

It catalyses the reaction an acyl phosphate + H2O = a carboxylate + phosphate + H(+). In Corynebacterium glutamicum (strain ATCC 13032 / DSM 20300 / JCM 1318 / BCRC 11384 / CCUG 27702 / LMG 3730 / NBRC 12168 / NCIMB 10025 / NRRL B-2784 / 534), this protein is Acylphosphatase (acyP).